The sequence spans 1159 residues: MSSQPRFIHLRTHTDFSMIDSIVKVKPLVKACAANEMVAMGLTDFTNFCGVVSFYSEMLSSGMKPIIGADVKVKSPLCGDEYFDLTLLAKNNEGYRNITLLLSKAYQRGYNDLPYIDQDWLIEHRDGVIILSGGTQGDVGKKLLKENVAEIESAVAFYQEFFADHFYLALSRTGRPNEERYIQAALKLAERCDLPLVATNDVMFLNTEDFEAHEIRVAIHDGYTLDDPKRPKCYTSQQYFRSEEDMCKLFADIPSALENTLLIAQRCSVTLRLGQYFLPQFPTGDLSTEDFLVQKSKEGLEERLVFLFPDEKVRLEKRPKYDERLQVELDVINQMGFPGYFLIVMEFIQWSKDNDIPVGPGRGSGAGSLVAYALKITDLDPLEFDLLFERFLNPERVSMPDFDVDFCMDGRDRVIEHVAETYGRGAVSQIITFGTMAAKAVIRDVGRVLGHPYGFVDRISKLIPPDPGMTLAKAFETEPQLQTAYDSDEEVRALINMARKLEGVTRNAGKHAGGVVISPTLITDFAPLYCDNEGLHPVTHFDKNDVEYAGLVKFDFLGLRTLTIIKWALDIINVRMVREGKPRVDIAAIPLDDPESFELLKRSETTAVFQLESRGMKDLIKRLQPDCFEDIIALVALFRPGPLQSGMVDNFIDRKHGREEVSYPDAEYQHASLKPILEPTYGIILYQEQVMQIAQVLAGYTLGGADLLRRAMGKKKPEEMAKQRLVFKEGAEKNGIDGELSMKIFDLVEKFAGYGFNKSHSAAYALVSYQTLWLKTHFPAEFMAAVMTSEMDNTDKIVGLYDECLRMGLKVTPPDINIGKHHFSVNEQGEIVYGIGAIKGVGEGPIEALVAARNEGGIFKDLFDLCARVDLKKINRRTFESLIMSGAFDKLGPHRAALSKNLEDALRASDQHAKDEAMGQTDMFGVLTETHEDVENAYANTPPYTEKQILDGERETLGLYLSSHPVSRYLKELSHYTSTRLKDLAPNRRGQISTVAGLVVASRIAMTKKGNRLGIATLDDRSGRLDLTLFGESLEQFGEKLQKDTVIVASGQVSFDDFSGGLKMTVRELMTLDEARSRYVKSLAISLSEHQITPSFIKQFKALLEPVSGGTLPINVYYQSPKGRALLRLGVQWSIIPTDEILTELVNLLGESAVELEFE.

It belongs to the DNA polymerase type-C family. DnaE subfamily. As to quaternary structure, DNA polymerase III contains a core (composed of alpha, epsilon and theta chains) that associates with a tau subunit. This core dimerizes to form the PolIII' complex. PolIII' associates with the gamma complex (composed of gamma, delta, delta', psi and chi chains) and with the beta chain to form the complete DNA polymerase III complex.

It is found in the cytoplasm. It carries out the reaction DNA(n) + a 2'-deoxyribonucleoside 5'-triphosphate = DNA(n+1) + diphosphate. Its function is as follows. DNA polymerase III is a complex, multichain enzyme responsible for most of the replicative synthesis in bacteria. This DNA polymerase also exhibits 3' to 5' exonuclease activity. The alpha chain is the DNA polymerase. The polypeptide is DNA polymerase III subunit alpha (dnaE) (Haemophilus influenzae (strain ATCC 51907 / DSM 11121 / KW20 / Rd)).